Here is a 335-residue protein sequence, read N- to C-terminus: Syntaxin-18 (335 aa).

At 1-309 (MAVDITLLFR…EDIREAIKNN (309 aa)) the chain is on the cytoplasmic side. Positions 168-208 (KLEPEPNTKTRESTSSEKVSRSPSKDSEENPATEERPEKIL) are enriched in basic and acidic residues. The interval 168 to 226 (KLEPEPNTKTRESTSSEKVSRSPSKDSEENPATEERPEKILAETQPELGTWGDGKGEDE) is disordered. The region spanning 243 to 305 (IGEMNSLFDE…KEGNEDIREA (63 aa)) is the t-SNARE coiled-coil homology domain. A helical; Anchor for type IV membrane protein transmembrane segment spans residues 310 to 330 (AGFRVWILFFLVMCSFSLLFL). At 331 to 335 (DWYDS) the chain is on the vesicular side.

The protein belongs to the syntaxin family. In terms of assembly, component of a SNARE complex consisting of STX18, USE1L, BNIP1/SEC20L, and SEC22B. RINT1/TIP20L and ZW10 are associated with the complex through interaction with BNIP1/SEC20L. Interacts directly with USE1L and BNIP1/SEC20L.

The protein resides in the endoplasmic reticulum membrane. It is found in the golgi apparatus membrane. Its function is as follows. Syntaxin that may be involved in targeting and fusion of Golgi-derived retrograde transport vesicles with the ER. The protein is Syntaxin-18 (STX18) of Pongo abelii (Sumatran orangutan).